The sequence spans 165 residues: Transcription antitermination protein NusB (165 aa).

The disordered stretch occupies residues 1–20; sequence MSDVENGGEPRQPSVKPANQ.

It belongs to the NusB family.

Involved in transcription antitermination. Required for transcription of ribosomal RNA (rRNA) genes. Binds specifically to the boxA antiterminator sequence of the ribosomal RNA (rrn) operons. This is Transcription antitermination protein NusB from Agrobacterium fabrum (strain C58 / ATCC 33970) (Agrobacterium tumefaciens (strain C58)).